Consider the following 437-residue polypeptide: Phosphoribosylamine--glycine ligase (437 aa).

The ATP-grasp domain occupies 109–316; that stretch reads KDFLARHGIP…LLDLIEAALN (208 aa). 135–196 is an ATP binding site; the sequence is VRQQGAPIVI…EEYLDGEEAS (62 aa). Mg(2+)-binding residues include Glu286 and Asn288.

The protein belongs to the GARS family. Mg(2+) is required as a cofactor. Mn(2+) serves as cofactor.

The catalysed reaction is 5-phospho-beta-D-ribosylamine + glycine + ATP = N(1)-(5-phospho-beta-D-ribosyl)glycinamide + ADP + phosphate + H(+). It functions in the pathway purine metabolism; IMP biosynthesis via de novo pathway; N(1)-(5-phospho-D-ribosyl)glycinamide from 5-phospho-alpha-D-ribose 1-diphosphate: step 2/2. The chain is Phosphoribosylamine--glycine ligase from Xylella fastidiosa (strain 9a5c).